A 227-amino-acid chain; its full sequence is Ribose-5-phosphate isomerase A (227 aa).

Substrate contacts are provided by residues 30 to 33 (TGST), 86 to 89 (DGAD), and 99 to 104 (KGMGGA). Glu-108 serves as the catalytic Proton acceptor. Residue Lys-126 participates in substrate binding.

It belongs to the ribose 5-phosphate isomerase family. In terms of assembly, homodimer.

It carries out the reaction aldehydo-D-ribose 5-phosphate = D-ribulose 5-phosphate. Its pathway is carbohydrate degradation; pentose phosphate pathway; D-ribose 5-phosphate from D-ribulose 5-phosphate (non-oxidative stage): step 1/1. Involved in the first step of the non-oxidative branch of the pentose phosphate pathway. It catalyzes the reversible conversion of ribose-5-phosphate to ribulose 5-phosphate. Can also act on D-ribose-5-diphosphate and D-ribose-5-triphosphate as substrate. This chain is Ribose-5-phosphate isomerase A, found in Thermus thermophilus (strain ATCC BAA-163 / DSM 7039 / HB27).